We begin with the raw amino-acid sequence, 382 residues long: Gap junction alpha-1 protein (382 aa).

Topologically, residues 2–23 (GDWSALGKLLDKVQAYSTAGGK) are cytoplasmic. Residue S5 is modified to Phosphoserine. Residues 24-44 (VWLSVLFIFRILLLGTAVESA) form a helical membrane-spanning segment. Residues 45 to 76 (WGDEQSAFRCNTQQPGCENVCYDKSFPISHVR) lie on the Extracellular side of the membrane. Disulfide bonds link C54–C192 and C187–C198. A helical transmembrane segment spans residues 77 to 97 (FWVLQIIFVSVPTLLYLAHVF). Topologically, residues 98–155 (YVMRKEEKLNKKEEELKVAQTDGVNVDMHLKQIEIKKFKYGIEEHGKVKMRGGLLRTY) are cytoplasmic. K144 is covalently cross-linked (Glycyl lysine isopeptide (Lys-Gly) (interchain with G-Cter in SUMO)). The chain crosses the membrane as a helical span at residues 156–176 (IISILFKSIFEVAFLLIQWYI). Residues 177–207 (YGFSLSAVYTCKRDPCPHQVDCFLSRPTEKT) lie on the Extracellular side of the membrane. The chain crosses the membrane as a helical span at residues 208–228 (IFIIFMLVVSLVSLALNIIEL). The Cytoplasmic portion of the chain corresponds to 229–382 (FYVFFKGVKD…SRPRPDDLEI (154 aa)). K237 is covalently cross-linked (Glycyl lysine isopeptide (Lys-Gly) (interchain with G-Cter in SUMO)). The interval 244-382 (SDPYHATSGA…SRPRPDDLEI (139 aa)) is interaction with NOV. Residue Y247 is modified to Phosphotyrosine. S255 and S262 each carry phosphoserine. Residues 264–382 (KYAYFNGCSS…SRPRPDDLEI (119 aa)) are interaction with UBQLN4. C271 is modified (S-nitrosocysteine). T275 bears the Phosphothreonine mark. 2 positions are modified to phosphoserine: S306 and S314. Residues 317 to 332 (QNRMGQAGSTISNSHA) are compositionally biased toward polar residues. A disordered region spans residues 317–382 (QNRMGQAGST…SRPRPDDLEI (66 aa)). The residue at position 325 (S325) is a Phosphoserine; by CK1. Position 326 is a phosphothreonine (T326). A phosphoserine; by CK1 mark is found at S328 and S330. Residues S344 and S365 each carry the phosphoserine modification. Low complexity predominate over residues 362-374 (RPSSRASSRASSR). At S368 the chain carries Phosphoserine; by PKC/PRKCG and PKC/PRKCD. A phosphoserine mark is found at S369 and S373.

The protein belongs to the connexin family. Alpha-type (group II) subfamily. In terms of assembly, a connexon is composed of a hexamer of connexins. Interacts (via C-terminus) with TJP1. Interacts (via C-terminus) with SRC (via SH3 domain). Interacts (not ubiquitinated) with UBQLN4 (via UBA domain). Interacts with SGSM3 and CNST. Interacts with RIC1/CIP150. Interacts with CSNK1D. Interacts with NOV. Interacts with TMEM65. Interacts with ANK3/ANKG and PKP2. Post-translationally, phosphorylated at Ser-368 by PRKCG; phosphorylation induces disassembly of gap junction plaques and inhibition of gap junction activity. Phosphorylation at Ser-325, Ser-328 and Ser-330 by CK1 modulates gap junction assembly. Phosphorylation at Ser-368 by PRKCD triggers its internalization into small vesicles leading to proteasome-mediated degradation. In terms of processing, sumoylated with SUMO1, SUMO2 and SUMO3, which may regulate the level of functional Cx43 gap junctions at the plasma membrane. May be desumoylated by SENP1 or SENP2. S-nitrosylation at Cys-271 is enriched at the muscle endothelial gap junction in arteries, it augments channel permeability and may regulate of smooth muscle cell to endothelial cell communication. Post-translationally, acetylated in the developing cortex; leading to delocalization from the cell membrane. As to expression, expressed at intercalated disks in the heart (at protein level). Expressed in the fetal cochlea.

It is found in the cell membrane. The protein resides in the cell junction. The protein localises to the gap junction. Its subcellular location is the endoplasmic reticulum. In terms of biological role, gap junction protein that acts as a regulator of bladder capacity. A gap junction consists of a cluster of closely packed pairs of transmembrane channels, the connexons, through which materials of low MW diffuse from one cell to a neighboring cell. May play a critical role in the physiology of hearing by participating in the recycling of potassium to the cochlear endolymph. Negative regulator of bladder functional capacity: acts by enhancing intercellular electrical and chemical transmission, thus sensitizing bladder muscles to cholinergic neural stimuli and causing them to contract. May play a role in cell growth inhibition through the regulation of NOV expression and localization. Plays an essential role in gap junction communication in the ventricles. The chain is Gap junction alpha-1 protein (GJA1) from Homo sapiens (Human).